Here is a 196-residue protein sequence, read N- to C-terminus: uncharacterized protein (196 aa).

A helical membrane pass occupies residues 11 to 31 (ICGFLLVILTIGGVLGGVYLV).

The protein localises to the membrane. This is an uncharacterized protein from Mycoplasma genitalium (strain ATCC 33530 / DSM 19775 / NCTC 10195 / G37) (Mycoplasmoides genitalium).